The sequence spans 141 residues: Hemoglobin subunit alpha (141 aa).

In terms of domain architecture, Globin spans 1–141 (VLSPADKTNI…VSTVLTSKYR (141 aa)). A Phosphoserine modification is found at Ser-3. Position 7 is an N6-succinyllysine (Lys-7). A Phosphothreonine modification is found at Thr-8. Lys-11 carries the N6-succinyllysine modification. The residue at position 16 (Lys-16) is an N6-acetyllysine; alternate. Lys-16 is subject to N6-succinyllysine; alternate. Phosphotyrosine is present on Tyr-24. The residue at position 35 (Ser-35) is a Phosphoserine. At Lys-40 the chain carries N6-succinyllysine. Ser-49 carries the phosphoserine modification. His-58 is an O2 binding site. Residue His-87 coordinates heme b. A Phosphoserine modification is found at Ser-102. Thr-108 is subject to Phosphothreonine. Ser-124 carries the phosphoserine modification. Residues Thr-134 and Thr-137 each carry the phosphothreonine modification. Ser-138 is subject to Phosphoserine.

Belongs to the globin family. In terms of assembly, heterotetramer of two alpha chains and two beta chains. Red blood cells.

In terms of biological role, involved in oxygen transport from the lung to the various peripheral tissues. Hemopressin acts as an antagonist peptide of the cannabinoid receptor CNR1. Hemopressin-binding efficiently blocks cannabinoid receptor CNR1 and subsequent signaling. This Vulpes vulpes (Red fox) protein is Hemoglobin subunit alpha (HBA).